The following is a 372-amino-acid chain: DNA primase small subunit PriS (372 aa).

Catalysis depends on residues D95, D97, and D280.

It belongs to the eukaryotic-type primase small subunit family. Heterodimer of a small subunit (PriS) and a large subunit (PriL). Mg(2+) is required as a cofactor. Requires Mn(2+) as cofactor.

Its function is as follows. Catalytic subunit of DNA primase, an RNA polymerase that catalyzes the synthesis of short RNA molecules used as primers for DNA polymerase during DNA replication. The small subunit contains the primase catalytic core and has DNA synthesis activity on its own. Binding to the large subunit stabilizes and modulates the activity, increasing the rate of DNA synthesis while decreasing the length of the DNA fragments, and conferring RNA synthesis capability. The DNA polymerase activity may enable DNA primase to also catalyze primer extension after primer synthesis. May also play a role in DNA repair. This Cenarchaeum symbiosum (strain A) protein is DNA primase small subunit PriS.